We begin with the raw amino-acid sequence, 110 residues long: UPF0339 protein YegP (110 aa).

Tandem repeats lie at residues 10 to 58 (SSDS…RYEK) and 61 to 109 (ASNG…VKDN).

Belongs to the UPF0339 family. Duplicated subfamily.

The polypeptide is UPF0339 protein YegP (yegP) (Escherichia coli O157:H7).